The chain runs to 181 residues: Adenine phosphoribosyltransferase (181 aa).

This sequence belongs to the purine/pyrimidine phosphoribosyltransferase family. As to quaternary structure, homodimer.

Its subcellular location is the cytoplasm. It carries out the reaction AMP + diphosphate = 5-phospho-alpha-D-ribose 1-diphosphate + adenine. The protein operates within purine metabolism; AMP biosynthesis via salvage pathway; AMP from adenine: step 1/1. Catalyzes a salvage reaction resulting in the formation of AMP, that is energically less costly than de novo synthesis. This is Adenine phosphoribosyltransferase from Vibrio vulnificus (strain CMCP6).